The sequence spans 341 residues: tRNA N6-adenosine threonylcarbamoyltransferase (341 aa).

Fe cation contacts are provided by His-112 and His-116. Substrate contacts are provided by residues 134–138, Asp-167, Gly-180, and Asn-279; that span reads LASGG. Asp-307 serves as a coordination point for Fe cation.

This sequence belongs to the KAE1 / TsaD family. Requires Fe(2+) as cofactor.

The protein resides in the cytoplasm. It carries out the reaction L-threonylcarbamoyladenylate + adenosine(37) in tRNA = N(6)-L-threonylcarbamoyladenosine(37) in tRNA + AMP + H(+). In terms of biological role, required for the formation of a threonylcarbamoyl group on adenosine at position 37 (t(6)A37) in tRNAs that read codons beginning with adenine. Is involved in the transfer of the threonylcarbamoyl moiety of threonylcarbamoyl-AMP (TC-AMP) to the N6 group of A37, together with TsaE and TsaB. TsaD likely plays a direct catalytic role in this reaction. This is tRNA N6-adenosine threonylcarbamoyltransferase from Rickettsia bellii (strain OSU 85-389).